The sequence spans 276 residues: uncharacterized protein (276 aa).

This is an uncharacterized protein from Fowl adenovirus A serotype 1 (strain CELO / Phelps) (FAdV-1).